The primary structure comprises 910 residues: Periodic tryptophan protein 2 homolog (910 aa).

14 WD repeats span residues 12 to 50 (GTVY…SKTL), 53 to 92 (DCNY…KIYT), 94 to 134 (RSNK…KVYN), 144 to 183 (LSSD…NLFI), 188 to 227 (SHKG…GELV), 271 to 310 (GKSV…LVHN), 313 to 355 (VSEM…YVMK), 358 to 397 (AHSL…CTVT), 400 to 439 (EHTS…NFRT), 443 to 485 (PEPT…DILS), 486 to 523 (GHES…AETV), 525 to 563 (VSHE…NLGS), 586 to 625 (AKTK…ILKK), and 688 to 728 (RPEV…DPFQ). Positions 867-910 (SKKSVKKEEEEEEDVSDESDDEDIEDESAGSDDEDSDDSVEIIE) are disordered. Acidic residues predominate over residues 875–910 (EEEEEDVSDESDDEDIEDESAGSDDEDSDDSVEIIE).

It belongs to the WD repeat PWP2 family.

This is Periodic tryptophan protein 2 homolog from Caenorhabditis elegans.